Consider the following 396-residue polypeptide: Tryptophan synthase beta chain (396 aa).

At K86 the chain carries N6-(pyridoxal phosphate)lysine.

Belongs to the TrpB family. Tetramer of two alpha and two beta chains. Requires pyridoxal 5'-phosphate as cofactor.

The enzyme catalyses (1S,2R)-1-C-(indol-3-yl)glycerol 3-phosphate + L-serine = D-glyceraldehyde 3-phosphate + L-tryptophan + H2O. Its pathway is amino-acid biosynthesis; L-tryptophan biosynthesis; L-tryptophan from chorismate: step 5/5. Its function is as follows. The beta subunit is responsible for the synthesis of L-tryptophan from indole and L-serine. The polypeptide is Tryptophan synthase beta chain (Francisella tularensis subsp. holarctica (strain FTNF002-00 / FTA)).